The following is a 426-amino-acid chain: Gamma-glutamyl phosphate reductase (426 aa).

Belongs to the gamma-glutamyl phosphate reductase family.

The protein resides in the cytoplasm. The enzyme catalyses L-glutamate 5-semialdehyde + phosphate + NADP(+) = L-glutamyl 5-phosphate + NADPH + H(+). It functions in the pathway amino-acid biosynthesis; L-proline biosynthesis; L-glutamate 5-semialdehyde from L-glutamate: step 2/2. Its function is as follows. Catalyzes the NADPH-dependent reduction of L-glutamate 5-phosphate into L-glutamate 5-semialdehyde and phosphate. The product spontaneously undergoes cyclization to form 1-pyrroline-5-carboxylate. The sequence is that of Gamma-glutamyl phosphate reductase from Cupriavidus pinatubonensis (strain JMP 134 / LMG 1197) (Cupriavidus necator (strain JMP 134)).